Consider the following 81-residue polypeptide: ATP synthase subunit c (81 aa).

A run of 2 helical transmembrane segments spans residues 6 to 26 (AAAS…GPGI) and 57 to 77 (LAFM…LLFA).

The protein belongs to the ATPase C chain family. F-type ATPases have 2 components, F(1) - the catalytic core - and F(0) - the membrane proton channel. F(1) has five subunits: alpha(3), beta(3), gamma(1), delta(1), epsilon(1). F(0) has four main subunits: a(1), b(1), b'(1) and c(10-14). The alpha and beta chains form an alternating ring which encloses part of the gamma chain. F(1) is attached to F(0) by a central stalk formed by the gamma and epsilon chains, while a peripheral stalk is formed by the delta, b and b' chains.

The protein resides in the cellular thylakoid membrane. Its function is as follows. F(1)F(0) ATP synthase produces ATP from ADP in the presence of a proton or sodium gradient. F-type ATPases consist of two structural domains, F(1) containing the extramembraneous catalytic core and F(0) containing the membrane proton channel, linked together by a central stalk and a peripheral stalk. During catalysis, ATP synthesis in the catalytic domain of F(1) is coupled via a rotary mechanism of the central stalk subunits to proton translocation. Key component of the F(0) channel; it plays a direct role in translocation across the membrane. A homomeric c-ring of between 10-14 subunits forms the central stalk rotor element with the F(1) delta and epsilon subunits. This chain is ATP synthase subunit c, found in Picosynechococcus sp. (strain ATCC 27264 / PCC 7002 / PR-6) (Agmenellum quadruplicatum).